Reading from the N-terminus, the 371-residue chain is Cytochrome b (371 aa).

4 helical membrane passes run 25–45 (FGSMLLTCTALQISTGFFLAV), 69–90 (WIMQNLHAIGASLFFLCIYIHI), 105–125 (WLSGTTLLIILMATAFFGYVL), and 170–190 (FFALHFILPFLITSLSSIHII). 2 residues coordinate heme b: H75 and H89. 2 residues coordinate heme b: H174 and H188. H193 provides a ligand contact to a ubiquinone. The next 4 helical transmembrane spans lie at 218-238 (YKDMFMISSMITLLFIVLSFM), 280-300 (LGGTLALLMSVIILTTTPFTH), 312-332 (LTQALFWTLIATFITITWTAT), and 339-358 (FTLISQVASVTYFSFFIINP).

Belongs to the cytochrome b family. As to quaternary structure, the cytochrome bc1 complex contains 3 respiratory subunits (MT-CYB, CYC1 and UQCRFS1), 2 core proteins (UQCRC1 and UQCRC2) and probably 6 low-molecular weight proteins. Heme b is required as a cofactor.

The protein resides in the mitochondrion inner membrane. Functionally, component of the ubiquinol-cytochrome c reductase complex (complex III or cytochrome b-c1 complex) that is part of the mitochondrial respiratory chain. The b-c1 complex mediates electron transfer from ubiquinol to cytochrome c. Contributes to the generation of a proton gradient across the mitochondrial membrane that is then used for ATP synthesis. The sequence is that of Cytochrome b (MT-CYB) from Toxicocalamus preussi (Preuss's forest snake).